Here is a 262-residue protein sequence, read N- to C-terminus: Acyl-[acyl-carrier-protein]--UDP-N-acetylglucosamine O-acyltransferase (262 aa).

This sequence belongs to the transferase hexapeptide repeat family. LpxA subfamily. Homotrimer.

The protein resides in the cytoplasm. The catalysed reaction is a (3R)-hydroxyacyl-[ACP] + UDP-N-acetyl-alpha-D-glucosamine = a UDP-3-O-[(3R)-3-hydroxyacyl]-N-acetyl-alpha-D-glucosamine + holo-[ACP]. It functions in the pathway glycolipid biosynthesis; lipid IV(A) biosynthesis; lipid IV(A) from (3R)-3-hydroxytetradecanoyl-[acyl-carrier-protein] and UDP-N-acetyl-alpha-D-glucosamine: step 1/6. Functionally, involved in the biosynthesis of lipid A, a phosphorylated glycolipid that anchors the lipopolysaccharide to the outer membrane of the cell. The protein is Acyl-[acyl-carrier-protein]--UDP-N-acetylglucosamine O-acyltransferase of Escherichia coli O157:H7.